A 566-amino-acid polypeptide reads, in one-letter code: Malate synthase, glyoxysomal (566 aa).

Arginine 179 functions as the Proton acceptor in the catalytic mechanism. Catalysis depends on aspartate 465, which acts as the Proton donor. A Microbody targeting signal motif is present at residues 564 to 566; sequence SRL.

It belongs to the malate synthase family.

The protein resides in the glyoxysome. The catalysed reaction is glyoxylate + acetyl-CoA + H2O = (S)-malate + CoA + H(+). It functions in the pathway carbohydrate metabolism; glyoxylate cycle; (S)-malate from isocitrate: step 2/2. This is Malate synthase, glyoxysomal (MLS) from Raphanus sativus (Radish).